A 127-amino-acid polypeptide reads, in one-letter code: MSNRKPYVREMKRTWWKDHPFYRFYMVREATVLPLILFTLFLTVGLGSLVKGPEAWQTWLDFMANPLVIAINLVALAGSLFHAQTFFSMMPQVVPIRLGGKLVDKKIIVLAQWAAVAFISLIVLIVV.

3 helical membrane passes run 30–50 (ATVL…GSLV), 67–87 (LVIA…QTFF), and 107–127 (IIVL…LIVV).

Belongs to the FrdC family. Part of an enzyme complex containing four subunits: a flavoprotein (FrdA), an iron-sulfur protein (FrdB), and two hydrophobic anchor proteins (FrdC and FrdD).

The protein resides in the cell inner membrane. Anchors the catalytic components of the fumarate reductase complex to the cell membrane, binds quinones. The protein is Fumarate reductase subunit C of Vibrio cholerae serotype O1 (strain ATCC 39541 / Classical Ogawa 395 / O395).